We begin with the raw amino-acid sequence, 288 residues long: Glycine--tRNA ligase alpha subunit (288 aa).

The protein belongs to the class-II aminoacyl-tRNA synthetase family. As to quaternary structure, tetramer of two alpha and two beta subunits.

It localises to the cytoplasm. The catalysed reaction is tRNA(Gly) + glycine + ATP = glycyl-tRNA(Gly) + AMP + diphosphate. In Rickettsia massiliae (strain Mtu5), this protein is Glycine--tRNA ligase alpha subunit.